Reading from the N-terminus, the 100-residue chain is uncharacterized protein (100 aa).

Positions M1 to P86 are disordered. Pro residues predominate over residues D35–L48.

This is an uncharacterized protein from Human herpesvirus 6A (strain Uganda-1102) (HHV-6 variant A).